Consider the following 150-residue polypeptide: Deoxyuridine 5'-triphosphate nucleotidohydrolase (150 aa).

Residues 67–69 (RSS), N80, and 84–86 (VID) contribute to the substrate site.

This sequence belongs to the dUTPase family. Mg(2+) is required as a cofactor.

It carries out the reaction dUTP + H2O = dUMP + diphosphate + H(+). The protein operates within pyrimidine metabolism; dUMP biosynthesis; dUMP from dCTP (dUTP route): step 2/2. This enzyme is involved in nucleotide metabolism: it produces dUMP, the immediate precursor of thymidine nucleotides and it decreases the intracellular concentration of dUTP so that uracil cannot be incorporated into DNA. This Lactococcus lactis subsp. lactis (strain IL1403) (Streptococcus lactis) protein is Deoxyuridine 5'-triphosphate nucleotidohydrolase (dut).